The following is a 430-amino-acid chain: Tol-Pal system protein TolB (430 aa).

The signal sequence occupies residues 1 to 21 (MKQALRVAVSFFMLWAAVLHA).

It belongs to the TolB family. In terms of assembly, the Tol-Pal system is composed of five core proteins: the inner membrane proteins TolA, TolQ and TolR, the periplasmic protein TolB and the outer membrane protein Pal. They form a network linking the inner and outer membranes and the peptidoglycan layer.

It localises to the periplasm. Its function is as follows. Part of the Tol-Pal system, which plays a role in outer membrane invagination during cell division and is important for maintaining outer membrane integrity. TolB occupies a key intermediary position in the Tol-Pal system because it communicates directly with both membrane-embedded components, Pal in the outer membrane and TolA in the inner membrane. The protein is Tol-Pal system protein TolB of Enterobacter sp. (strain 638).